We begin with the raw amino-acid sequence, 216 residues long: Refilin-B (216 aa).

The tract at residues methionine 1 to valine 55 is disordered. Phosphoserine occurs at positions 6 and 26.

Belongs to the Refilin family. As to quaternary structure, interacts with FLNA and FLNB. As to expression, detected in various tissues, with highest expression in lung, followed by spleen.

The protein localises to the cytoplasm. Its subcellular location is the cytoskeleton. Involved in the regulation of the perinuclear actin network and nuclear shape through interaction with filamins. Plays an essential role in the formation of cartilaginous skeletal elements. The polypeptide is Refilin-B (Mus musculus (Mouse)).